Consider the following 286-residue polypeptide: 2-hydroxy-6-oxo-6-phenylhexa-2,4-dienoate hydrolase (286 aa).

Substrate is bound by residues 42 to 43 (GG), asparagine 51, lysine 111, serine 180, and arginine 190. In terms of domain architecture, AB hydrolase-1 spans 173–271 (NVFLFDQSLI…RCVHWAQWEH (99 aa)). The active-site Proton acceptor is histidine 265. Residue tryptophan 266 coordinates substrate.

Belongs to the AB hydrolase superfamily. BphD family. As to quaternary structure, homodimer.

It carries out the reaction 2,6-dioxo-6-phenylhexa-3-enoate + H2O = 2-oxopent-4-enoate + benzoate + H(+). The protein operates within xenobiotic degradation; biphenyl degradation; 2-hydroxy-2,4-pentadienoate and benzoate from biphenyl: step 4/4. Its function is as follows. Catalyzes an unusual C-C bond hydrolysis of 2-hydroxy-6-oxo-6-phenylhexa-2,4-dienoic acid (HOPDA) to produce benzoic acid and 2-hydroxy-2,4-pentadienoic acid (HPD). This Delftia acidovorans (Pseudomonas acidovorans) protein is 2-hydroxy-6-oxo-6-phenylhexa-2,4-dienoate hydrolase.